A 428-amino-acid polypeptide reads, in one-letter code: ATP-dependent RNA helicase RhlB (428 aa).

Residues 9 to 37 (QKFSDFALHPLVLEALEKKGFQHCTPIQA) carry the Q motif motif. Residues 40 to 219 (LPLTLSGRDV…FEQMNNAEYV (180 aa)) enclose the Helicase ATP-binding domain. 53-60 (AQTGTGKT) serves as a coordination point for ATP. The short motif at 165–168 (DEAD) is the DEAD box element. In terms of domain architecture, Helicase C-terminal spans 245 to 390 (RLLQTLIEEE…VSKYNSDALL (146 aa)). Positions 392–428 (DLPAPKRLARPRGGNGPRRNSAPRRGGAPRNNRKRSG) are disordered. The span at 408-421 (PRRNSAPRRGGAPR) shows a compositional bias: low complexity.

It belongs to the DEAD box helicase family. RhlB subfamily. In terms of assembly, component of the RNA degradosome, which is a multiprotein complex involved in RNA processing and mRNA degradation.

The protein localises to the cytoplasm. The enzyme catalyses ATP + H2O = ADP + phosphate + H(+). In terms of biological role, DEAD-box RNA helicase involved in RNA degradation. Has RNA-dependent ATPase activity and unwinds double-stranded RNA. This Serratia proteamaculans (strain 568) protein is ATP-dependent RNA helicase RhlB.